Reading from the N-terminus, the 301-residue chain is Asialoglycoprotein receptor 2 (301 aa).

Residues 1 to 43 form a disordered region; the sequence is MEKDCQDIQQLDSEENDHQLSGDDEHGSHVQDPRIENPHWKGQ. At 1–58 the chain is on the cytoplasmic side; sequence MEKDCQDIQQLDSEENDHQLSGDDEHGSHVQDPRIENPHWKGQPLSRPFPQRLCSTFR. At serine 13 the chain carries Phosphoserine. A compositionally biased stretch (basic and acidic residues) spans 16–39; that stretch reads NDHQLSGDDEHGSHVQDPRIENPH. Cysteine 54 carries the S-palmitoyl cysteine lipid modification. The helical; Signal-anchor for type II membrane protein transmembrane segment at 59-79 threads the bilayer; the sequence is LSLLALAFNILLLVVICVVSS. Residues 80-301 are Extracellular-facing; the sequence is QSIQLQEEFR…VCEKRRNITH (222 aa). 2 N-linked (GlcNAc...) asparagine glycosylation sites follow: asparagine 97 and asparagine 165. Residues 169–295 enclose the C-type lectin domain; sequence CCPVNWVEFG…QQVNRWVCEK (127 aa). 3 cysteine pairs are disulfide-bonded: cysteine 170/cysteine 181, cysteine 198/cysteine 293, and cysteine 271/cysteine 285. Asparagine 298 carries an N-linked (GlcNAc...) asparagine glycan.

As to quaternary structure, interacts with LASS2. In terms of tissue distribution, expressed exclusively in hepatic parenchymal cells.

The protein resides in the membrane. Functionally, mediates the endocytosis of plasma glycoproteins to which the terminal sialic acid residue on their complex carbohydrate moieties has been removed. The receptor recognizes terminal galactose and N-acetylgalactosamine units. After ligand binding to the receptor, the resulting complex is internalized and transported to a sorting organelle, where receptor and ligand are disassociated. The receptor then returns to the cell membrane surface. In Mus musculus (Mouse), this protein is Asialoglycoprotein receptor 2 (Asgr2).